The following is a 182-amino-acid chain: MQTEHVILLNAQGVPTGTLEKYAAHTADTLLHLAFSSWLFNAKGQLLVTRRALSKKAWPGVWTNSVCGHPQLGESNEDAVIRRCRYELGVEITPPESIYPDFRYRATDPNGIVENEVCPVFAARTNSALQINDDEVMDYQWCDLADVLHGIDATPWAFSPWMVMQAANSEARKLLSAFAQHN.

Residues His25 and His32 each contribute to the Mn(2+) site. Residues Leu30 to Met164 enclose the Nudix hydrolase domain. Cys67 is a catalytic residue. A Mg(2+)-binding site is contributed by Cys67. Mn(2+) is bound at residue His69. Glu87 contacts Mg(2+). Mn(2+)-binding residues include Glu114 and Glu116. Glu116 is an active-site residue.

Belongs to the IPP isomerase type 1 family. Homodimer. The cofactor is Mg(2+). Requires Mn(2+) as cofactor.

Its subcellular location is the cytoplasm. It carries out the reaction isopentenyl diphosphate = dimethylallyl diphosphate. It functions in the pathway isoprenoid biosynthesis; dimethylallyl diphosphate biosynthesis; dimethylallyl diphosphate from isopentenyl diphosphate: step 1/1. In terms of biological role, catalyzes the 1,3-allylic rearrangement of the homoallylic substrate isopentenyl (IPP) to its highly electrophilic allylic isomer, dimethylallyl diphosphate (DMAPP). This Shigella boydii serotype 4 (strain Sb227) protein is Isopentenyl-diphosphate Delta-isomerase.